The chain runs to 290 residues: Eukaryotic translation initiation factor 3 subunit F-2 (290 aa).

The 139-residue stretch at 12 to 150 (VRLQPLVLFQ…TRLYCAVTMG (139 aa)) folds into the MPN domain.

Belongs to the eIF-3 subunit F family. As to quaternary structure, component of the eukaryotic translation initiation factor 3 (eIF-3) complex. The eIF-3 complex interacts with pix.

The protein resides in the cytoplasm. Component of the eukaryotic translation initiation factor 3 (eIF-3) complex, which is involved in protein synthesis of a specialized repertoire of mRNAs and, together with other initiation factors, stimulates binding of mRNA and methionyl-tRNAi to the 40S ribosome. The eIF-3 complex specifically targets and initiates translation of a subset of mRNAs involved in cell proliferation. This chain is Eukaryotic translation initiation factor 3 subunit F-2, found in Drosophila mojavensis (Fruit fly).